The sequence spans 99 residues: DNA-binding protein Fis (99 aa).

The H-T-H motif DNA-binding region spans Gln75–Lys94.

Belongs to the transcriptional regulatory Fis family. As to quaternary structure, homodimer.

Its function is as follows. Activates ribosomal RNA transcription. Plays a direct role in upstream activation of rRNA promoters. In Tolumonas auensis (strain DSM 9187 / NBRC 110442 / TA 4), this protein is DNA-binding protein Fis.